We begin with the raw amino-acid sequence, 506 residues long: Maturase K (506 aa).

The protein belongs to the intron maturase 2 family. MatK subfamily.

The protein resides in the plastid. It localises to the chloroplast. Its function is as follows. Usually encoded in the trnK tRNA gene intron. Probably assists in splicing its own and other chloroplast group II introns. This is Maturase K from Trifolium lupinaster (Lupine clover).